Here is a 479-residue protein sequence, read N- to C-terminus: UDP-N-acetylmuramate--L-alanine ligase (479 aa).

128–134 (GAHGKTT) is an ATP binding site.

Belongs to the MurCDEF family.

It is found in the cytoplasm. It carries out the reaction UDP-N-acetyl-alpha-D-muramate + L-alanine + ATP = UDP-N-acetyl-alpha-D-muramoyl-L-alanine + ADP + phosphate + H(+). It functions in the pathway cell wall biogenesis; peptidoglycan biosynthesis. Its function is as follows. Cell wall formation. The polypeptide is UDP-N-acetylmuramate--L-alanine ligase (Psychrobacter arcticus (strain DSM 17307 / VKM B-2377 / 273-4)).